The primary structure comprises 246 residues: MSSINKKELKKFEKISHNWWNKDGEFGILHRINHIRIEYIIEKIKLHYNDISKLQILDVGCGGGLIAAPLASQGFNVTAIDALKSNIETATIYAQKNDLKINYLQTTIEELENDKLYDVVICLEVIEHVENVQQFILNLVQHIKPNGIAIISTINRTKKAYLFGIIVAEYILGWVPKNTHDYSKFLKPSEIYEILTDTNIEIKELKGLVFNLARNEWKLSNDIDVNYFMYLGKKINSLSNAINSIP.

Residues Arg-36, Gly-60, Asp-81, and Leu-123 each contribute to the S-adenosyl-L-methionine site.

The protein belongs to the methyltransferase superfamily. UbiG/COQ3 family.

The catalysed reaction is a 3-demethylubiquinol + S-adenosyl-L-methionine = a ubiquinol + S-adenosyl-L-homocysteine + H(+). It carries out the reaction a 3-(all-trans-polyprenyl)benzene-1,2-diol + S-adenosyl-L-methionine = a 2-methoxy-6-(all-trans-polyprenyl)phenol + S-adenosyl-L-homocysteine + H(+). It participates in cofactor biosynthesis; ubiquinone biosynthesis. Functionally, O-methyltransferase that catalyzes the 2 O-methylation steps in the ubiquinone biosynthetic pathway. The protein is Ubiquinone biosynthesis O-methyltransferase of Rickettsia typhi (strain ATCC VR-144 / Wilmington).